A 791-amino-acid polypeptide reads, in one-letter code: Penicillin-binding protein 1A (791 aa).

The Cytoplasmic segment spans residues 1-6 (MYKSLF). The helical; Signal-anchor for type II membrane protein transmembrane segment at 7–27 (FCLKILALLFLIGCGIVAYII) threads the bilayer. Over 28-791 (YYYSRDLPDY…TEKDQSQEIY (764 aa)) the chain is Periplasmic. The transglycosylase stretch occupies residues 49-220 (TRIYSRDGKL…SELNPEKNYA (172 aa)). Glutamate 87 acts as the Proton donor; for transglycosylase activity in catalysis. The interval 398–711 (DVIVVEPVKD…SSVVLPIFID (314 aa)) is transpeptidase. The Acyl-ester intermediate; for transpeptidase activity role is filled by serine 457.

It in the N-terminal section; belongs to the glycosyltransferase 51 family. In the C-terminal section; belongs to the transpeptidase family.

Its subcellular location is the cell inner membrane. The enzyme catalyses [GlcNAc-(1-&gt;4)-Mur2Ac(oyl-L-Ala-gamma-D-Glu-L-Lys-D-Ala-D-Ala)](n)-di-trans,octa-cis-undecaprenyl diphosphate + beta-D-GlcNAc-(1-&gt;4)-Mur2Ac(oyl-L-Ala-gamma-D-Glu-L-Lys-D-Ala-D-Ala)-di-trans,octa-cis-undecaprenyl diphosphate = [GlcNAc-(1-&gt;4)-Mur2Ac(oyl-L-Ala-gamma-D-Glu-L-Lys-D-Ala-D-Ala)](n+1)-di-trans,octa-cis-undecaprenyl diphosphate + di-trans,octa-cis-undecaprenyl diphosphate + H(+). It catalyses the reaction Preferential cleavage: (Ac)2-L-Lys-D-Ala-|-D-Ala. Also transpeptidation of peptidyl-alanyl moieties that are N-acyl substituents of D-alanine.. Its pathway is cell wall biogenesis; peptidoglycan biosynthesis. Cell wall formation. Synthesis of cross-linked peptidoglycan from the lipid intermediates. The enzyme has a penicillin-insensitive transglycosylase N-terminal domain (formation of linear glycan strands) and a penicillin-sensitive transpeptidase C-terminal domain (cross-linking of the peptide subunits). The polypeptide is Penicillin-binding protein 1A (mrcA) (Rickettsia bellii (strain RML369-C)).